The primary structure comprises 661 residues: Arginine--tRNA ligase, cytoplasmic (661 aa).

Met1 is subject to N-acetylmethionine. Residues 1–73 (MDGLVAQCSA…AEKRRRPTKN (73 aa)) are could be involved in the assembly of the multisynthetase complex. L-arginine contacts are provided by residues 201–203 (SPN), His212, Tyr385, Asp389, and Gln413. A 'HIGH' region motif is present at residues 202-213 (PNIAKEMHVGHL). The interaction with tRNA stretch occupies residues 530–544 (NTAAYLLYAFTRIRS).

This sequence belongs to the class-I aminoacyl-tRNA synthetase family. Interacts (via N-terminus) with AIMP1 (via N-terminus); this stimulates its catalytic activity. Interacts (via N-terminus) with LARS2 (via C-terminus). Monomer. Part of a multisubunit complex that groups tRNA ligases for Arg (RARS1), Asp (DARS1), Gln (QARS1), Ile (IARS1), Leu (LARS1), Lys (KARS1), Met (MARS1) the bifunctional ligase for Glu and Pro (EPRS1) and the auxiliary subunits AIMP1/p43, AIMP2/p38 and EEF1E1/p18. Interacts with QARS1. Part of a complex composed of RARS1, QARS1 and AIMP1.

It localises to the cytoplasm. Its subcellular location is the cytosol. It catalyses the reaction tRNA(Arg) + L-arginine + ATP = L-arginyl-tRNA(Arg) + AMP + diphosphate. In terms of biological role, forms part of a macromolecular complex that catalyzes the attachment of specific amino acids to cognate tRNAs during protein synthesis. Modulates the secretion of AIMP1 and may be involved in generation of the inflammatory cytokine EMAP2 from AIMP1. This is Arginine--tRNA ligase, cytoplasmic (RARS1) from Cricetulus griseus (Chinese hamster).